A 642-amino-acid chain; its full sequence is Threonine--tRNA ligase (642 aa).

The TGS domain occupies 1–65; it reads MSDIITVTLP…DEDVKLQIFT (65 aa). A catalytic region spans residues 248–541; it reads DHRKLGKELD…LIEHFAGAFP (294 aa). Zn(2+) is bound by residues Cys342, His393, and His518.

It belongs to the class-II aminoacyl-tRNA synthetase family. Homodimer. Zn(2+) is required as a cofactor.

Its subcellular location is the cytoplasm. It catalyses the reaction tRNA(Thr) + L-threonine + ATP = L-threonyl-tRNA(Thr) + AMP + diphosphate + H(+). Its function is as follows. Catalyzes the attachment of threonine to tRNA(Thr) in a two-step reaction: L-threonine is first activated by ATP to form Thr-AMP and then transferred to the acceptor end of tRNA(Thr). Also edits incorrectly charged L-seryl-tRNA(Thr). This Myxococcus xanthus (strain DK1622) protein is Threonine--tRNA ligase.